The sequence spans 777 residues: Phosphoribosylformylglycinamidine synthase subunit PurL (777 aa).

Residue H50 is part of the active site. Positions 53 and 92 each coordinate ATP. E94 is a binding site for Mg(2+). Substrate-binding positions include 95–98 and R117; that span reads SHNH. Catalysis depends on H96, which acts as the Proton acceptor. D118 lines the Mg(2+) pocket. Residue Q241 participates in substrate binding. A Mg(2+)-binding site is contributed by D269. 313–315 contacts substrate; sequence ESQ. 2 residues coordinate ATP: D520 and G557. A Mg(2+)-binding site is contributed by N558. S560 lines the substrate pocket.

It belongs to the FGAMS family. In terms of assembly, monomer. Part of the FGAM synthase complex composed of 1 PurL, 1 PurQ and 2 PurS subunits.

The protein localises to the cytoplasm. It carries out the reaction N(2)-formyl-N(1)-(5-phospho-beta-D-ribosyl)glycinamide + L-glutamine + ATP + H2O = 2-formamido-N(1)-(5-O-phospho-beta-D-ribosyl)acetamidine + L-glutamate + ADP + phosphate + H(+). Its pathway is purine metabolism; IMP biosynthesis via de novo pathway; 5-amino-1-(5-phospho-D-ribosyl)imidazole from N(2)-formyl-N(1)-(5-phospho-D-ribosyl)glycinamide: step 1/2. Part of the phosphoribosylformylglycinamidine synthase complex involved in the purines biosynthetic pathway. Catalyzes the ATP-dependent conversion of formylglycinamide ribonucleotide (FGAR) and glutamine to yield formylglycinamidine ribonucleotide (FGAM) and glutamate. The FGAM synthase complex is composed of three subunits. PurQ produces an ammonia molecule by converting glutamine to glutamate. PurL transfers the ammonia molecule to FGAR to form FGAM in an ATP-dependent manner. PurS interacts with PurQ and PurL and is thought to assist in the transfer of the ammonia molecule from PurQ to PurL. The polypeptide is Phosphoribosylformylglycinamidine synthase subunit PurL (Trichormus variabilis (strain ATCC 29413 / PCC 7937) (Anabaena variabilis)).